Reading from the N-terminus, the 570-residue chain is Urease subunit alpha (570 aa).

Residues 131–570 (GGFDSHIHFI…LPMAQRYFMY (440 aa)) form the Urease domain. Ni(2+)-binding residues include histidine 136, histidine 138, and lysine 219. Position 219 is an N6-carboxylysine (lysine 219). Histidine 221 contacts substrate. 2 residues coordinate Ni(2+): histidine 248 and histidine 274. Histidine 322 (proton donor) is an active-site residue. Aspartate 362 contributes to the Ni(2+) binding site.

The protein belongs to the metallo-dependent hydrolases superfamily. Urease alpha subunit family. As to quaternary structure, heterotrimer of UreA (gamma), UreB (beta) and UreC (alpha) subunits. Three heterotrimers associate to form the active enzyme. Ni cation serves as cofactor. Post-translationally, carboxylation allows a single lysine to coordinate two nickel ions.

It localises to the cytoplasm. It catalyses the reaction urea + 2 H2O + H(+) = hydrogencarbonate + 2 NH4(+). It functions in the pathway nitrogen metabolism; urea degradation; CO(2) and NH(3) from urea (urease route): step 1/1. In Rhodopseudomonas palustris (strain HaA2), this protein is Urease subunit alpha.